The chain runs to 322 residues: Transcriptional activator protein Pur-alpha (322 aa).

A disordered region spans residues 1–55; that stretch reads MADRDSGSEQGGAALGSGGSLGHPGSGSGSGGGGGGGGGGGGSGGGGGGAPGGLQ. The residue at position 2 (alanine 2) is an N-acetylalanine. Residues 9–52 show a composition bias toward gly residues; it reads EQGGAALGSGGSLGHPGSGSGSGGGGGGGGGGGGSGGGGGGAPG. One copy of the PUR repeat I repeat lies at 60–125; that stretch reads ELASKRVDIQ…DFIEHYAQLG (66 aa). A PUR repeat II repeat occupies 142 to 213; the sequence is ALKSEFLVRE…KLIDDYGVEE (72 aa). Serine 182 bears the Phosphoserine mark. The PUR repeat III repeat unit spans residues 215 to 281; that stretch reads PAELPEGTSL…CKYSEEMKKI (67 aa). A compositionally biased stretch (low complexity) spans 295-314; sequence LHQQQQQQQEETAAATLLLQ. The disordered stretch occupies residues 295–322; the sequence is LHQQQQQQQEETAAATLLLQGEEEGEED.

The protein belongs to the PUR DNA-binding protein family. As to quaternary structure, homodimer, heterodimer with PURB and heterotrimer with PURB and YBX1/Y-box protein 1. Interacts with FMR1; this interaction occurs in association with polyribosome.

The protein resides in the nucleus. Functionally, this is a probable transcription activator that specifically binds the purine-rich single strand of the PUR element located upstream of the MYC gene. May play a role in the initiation of DNA replication and in recombination. This chain is Transcriptional activator protein Pur-alpha (PURA), found in Homo sapiens (Human).